The following is a 109-amino-acid chain: Large ribosomal subunit protein uL22 (109 aa).

The protein belongs to the universal ribosomal protein uL22 family. Part of the 50S ribosomal subunit.

Functionally, this protein binds specifically to 23S rRNA; its binding is stimulated by other ribosomal proteins, e.g. L4, L17, and L20. It is important during the early stages of 50S assembly. It makes multiple contacts with different domains of the 23S rRNA in the assembled 50S subunit and ribosome. The globular domain of the protein is located near the polypeptide exit tunnel on the outside of the subunit, while an extended beta-hairpin is found that lines the wall of the exit tunnel in the center of the 70S ribosome. In Laribacter hongkongensis (strain HLHK9), this protein is Large ribosomal subunit protein uL22.